The following is a 2026-amino-acid chain: E3 ubiquitin-protein ligase TRIP12 (2026 aa).

3 stretches are compositionally biased toward polar residues: residues 1-10 (MSNRPNSNPG), 32-42 (GRNSLSLSVGS), and 73-84 (SSVSEPNITFSP). The disordered stretch occupies residues 1–437 (MSNRPNSNPG…SGESESDDSE (437 aa)). Composition is skewed to low complexity over residues 94–112 (SSHF…AISP), 135–161 (AEPA…STPS), 171–188 (LLSS…SAAG), and 199–241 (AAKP…SSAA). Residues 359-371 (QKTTGSCASTSRR) are compositionally biased toward polar residues. Residues 379–391 (GAAEARRQEKMAD) are compositionally biased toward basic and acidic residues. The span at 392–404 (SDNNQDGANSSAA) shows a compositional bias: polar residues. A compositionally biased stretch (low complexity) spans 412–430 (GASASSSVAGAVGMTTSGE). In terms of domain architecture, WWE spans 789 to 876 (MLKKGSAQTT…DPELAKCFIK (88 aa)). Disordered regions lie at residues 1008-1123 (SNVT…SVSN) and 1441-1470 (GCKD…KQDE). The segment covering 1040–1053 (KRKRLPKRGPRRPK) has biased composition (basic residues). Positions 1056–1065 (PPRDDDKVDN) are enriched in basic and acidic residues. Low complexity predominate over residues 1068–1079 (KSPTTTQSPKSS). Residues 1094-1104 (TQANSANSEPS) show a composition bias toward polar residues. The K-box stretch occupies residues 1530 to 1604 (EIIPTGEFIN…AMQRLLDTNP (75 aa)). One can recognise an HECT domain in the interval 1919–2026 (PDHGYTHDSR…REGQQSFHLS (108 aa)). Cysteine 1993 serves as the catalytic Glycyl thioester intermediate.

This sequence belongs to the UPL family. K-HECT subfamily.

It localises to the nucleus. Its subcellular location is the nucleoplasm. It catalyses the reaction S-ubiquitinyl-[E2 ubiquitin-conjugating enzyme]-L-cysteine + [acceptor protein]-L-lysine = [E2 ubiquitin-conjugating enzyme]-L-cysteine + N(6)-ubiquitinyl-[acceptor protein]-L-lysine.. It functions in the pathway protein modification; protein ubiquitination. E3 ubiquitin-protein ligase involved in ubiquitin fusion degradation (UFD) pathway and regulation of DNA repair. Part of the ubiquitin fusion degradation (UFD) pathway, a process that mediates ubiquitination of protein at their N-terminus, regardless of the presence of lysine residues in target proteins. Acts as a key regulator of DNA damage response by acting as a suppressor of RNF168, an E3 ubiquitin-protein ligase that promotes accumulation of 'Lys-63'-linked histone H2A and H2AX at DNA damage sites, thereby acting as a guard against excessive spreading of ubiquitinated chromatin at damaged chromosomes. This chain is E3 ubiquitin-protein ligase TRIP12 (trip12), found in Danio rerio (Zebrafish).